The chain runs to 158 residues: Hypoxanthine DNA glycosylase (158 aa).

N39 is an active-site residue.

The protein belongs to the uracil-DNA glycosylase (UDG) superfamily. Type 6 (HDG) family.

Its function is as follows. Excises hypoxanthine, a deamination product of adenine, from double-stranded DNA. Acts on double-stranded DNA containing G/I, T/I, A/I and C/I base pairs, but not on single-stranded inosine-containing DNA. Also has minor xanthine DNA glycosylase activity. Lacks any detectable uracil-DNA glycosylase activity. This chain is Hypoxanthine DNA glycosylase, found in Methanosarcina acetivorans (strain ATCC 35395 / DSM 2834 / JCM 12185 / C2A).